The following is a 120-amino-acid chain: MSKLKITNARRKQRVRLSLRRIANGRPRLSVFRSSKHIYAQVIDDLKGETLASASSLEKAMRDAGNTGADIDAAKAVGKLVAERAVKNGVKEVVFDRGGYLYHGRVKALADAARESGLSF.

It belongs to the universal ribosomal protein uL18 family. In terms of assembly, part of the 50S ribosomal subunit; part of the 5S rRNA/L5/L18/L25 subcomplex. Contacts the 5S and 23S rRNAs.

This is one of the proteins that bind and probably mediate the attachment of the 5S RNA into the large ribosomal subunit, where it forms part of the central protuberance. The sequence is that of Large ribosomal subunit protein uL18 from Nitrobacter winogradskyi (strain ATCC 25391 / DSM 10237 / CIP 104748 / NCIMB 11846 / Nb-255).